Here is a 477-residue protein sequence, read N- to C-terminus: Multidrug resistance protein PmpM (477 aa).

12 helical membrane passes run 21–41, 56–76, 104–124, 133–153, 171–191, 202–222, 253–273, 286–306, 326–346, 360–380, 398–418, and 431–451; these read LLTL…MGFV, AVAL…GTLL, LALL…EPIL, LIGP…AAAL, MVLG…LIYG, GCGW…LFWV, LPIG…ALLI, IALN…MAVT, GVGM…MLLL, VIAI…SDAL, MIMT…SLGL, and LWQG…IRLA.

This sequence belongs to the multi antimicrobial extrusion (MATE) (TC 2.A.66.1) family.

Its subcellular location is the cell inner membrane. In terms of biological role, multidrug efflux pump that functions as an H(+)/drug antiporter. Confers resistance to benzalkonium chloride, fluoroquinolones, ethidium bromide, acriflavine and tetraphenylphosphonium chloride. The sequence is that of Multidrug resistance protein PmpM (pmpM) from Pseudomonas aeruginosa (strain ATCC 15692 / DSM 22644 / CIP 104116 / JCM 14847 / LMG 12228 / 1C / PRS 101 / PAO1).